Reading from the N-terminus, the 555-residue chain is WRKY transcription factor WRKY24 (555 aa).

Disordered stretches follow at residues Thr133 to Asn183 and Ser197 to Pro248. Over residues Gln163 to Asn183 the composition is skewed to low complexity. The WRKY 1 DNA-binding region spans Ser214–Pro278. Positions Lys253–Ser259 match the Nuclear localization signal motif. Positions Lys270–Asn365 are disordered. Composition is skewed to polar residues over residues Lys277–Gln294 and Thr310–Ser320. The span at Asp347 to Asp356 shows a compositional bias: basic and acidic residues. The segment at residues Ser379–Pro444 is a DNA-binding region (WRKY 2). A transcription repression of gibberellic acid (GA)-induced promoters region spans residues His466–Tyr555. A disordered region spans residues Phe514 to Tyr555.

Belongs to the WRKY group II-a family. In terms of tissue distribution, expressed in aleurone cells. Mostly expressed in aleurone layers and leaves, and, to a lower extent, in roots, panicles and embryos.

It is found in the nucleus. Functionally, transcription activator. Interacts specifically with the W box (5'-(T)TGAC[CT]-3'), a frequently occurring elicitor-responsive cis-acting element. Negative regulator of both gibberellic acid (GA) and abscisic acid (ABA) signaling in aleurone cells, probably by interfering with GAM1, via the specific repression of GA- and ABA-induced promoters. This Oryza sativa subsp. japonica (Rice) protein is WRKY transcription factor WRKY24.